The following is a 316-amino-acid chain: Transcription factor MafB (316 aa).

2 disordered regions span residues 40 to 78 and 116 to 204; these read PDRAIRPCNRLQPTGSVSSTPISTPCSSVPSSPSFSPTE and HQMP…EDRF. Over residues 55–77 the composition is skewed to low complexity; that stretch reads SVSSTPISTPCSSVPSSPSFSPT. Composition is skewed to basic residues over residues 130–144 and 160–172; these read GHHHHHHNNHHHQNH and QHPHHHHHHHHHQ. Residues 177 to 198 show a composition bias toward low complexity; that stretch reads PSGSSSSSQQLQNSHQQHQNSS. The segment at 231–256 is basic motif; the sequence is RLKQKRRTLKNRGYAQSCRFKRVQQK. In terms of domain architecture, bZIP spans 231–294; sequence RLKQKRRTLK…DAYKIKCEKL (64 aa). The tract at residues 259-280 is leucine-zipper; sequence LENEKTQLIQQVEQLKLEVSRL.

It belongs to the bZIP family. Maf subfamily. As to quaternary structure, homodimer or heterodimer with other bHLH-Zip transcription factors. Binds DNA as a homodimer or a heterodimer.

Its subcellular location is the nucleus. Its function is as follows. Acts as a transcriptional activator or repressor. Implicated in the regulation of cell-type specific gene expression and play a role in inductive events during lens development. The chain is Transcription factor MafB (mafb) from Xenopus tropicalis (Western clawed frog).